A 328-amino-acid polypeptide reads, in one-letter code: GMP reductase (328 aa).

Cys-176 serves as the catalytic Thioimidate intermediate. Position 205-228 (205-228 (IIADGGIRTHGDIAKSIRFGASMI)) interacts with NADP(+).

The protein belongs to the IMPDH/GMPR family. GuaC type 2 subfamily.

The catalysed reaction is IMP + NH4(+) + NADP(+) = GMP + NADPH + 2 H(+). Catalyzes the irreversible NADPH-dependent deamination of GMP to IMP. It functions in the conversion of nucleobase, nucleoside and nucleotide derivatives of G to A nucleotides, and in maintaining the intracellular balance of A and G nucleotides. This chain is GMP reductase, found in Streptococcus pneumoniae (strain Taiwan19F-14).